Reading from the N-terminus, the 462-residue chain is Siroheme synthase (462 aa).

The tract at residues 1–201 is precorrin-2 dehydrogenase /sirohydrochlorin ferrochelatase; that stretch reads MQFLPLFHKL…GKPEEGERLL (201 aa). Residues 22–23 and 43–44 each bind NAD(+); these read EV and PE. Ser126 is subject to Phosphoserine. The uroporphyrinogen-III C-methyltransferase stretch occupies residues 214–462; that stretch reads GEVYLVGAGP…AWFEGAQGSL (249 aa). Pro223 contacts S-adenosyl-L-methionine. The active-site Proton acceptor is the Asp246. Lys268 functions as the Proton donor in the catalytic mechanism. Residues 299 to 301, Ile304, 329 to 330, Met381, and Gly410 contribute to the S-adenosyl-L-methionine site; these read GGD and TA.

It in the N-terminal section; belongs to the precorrin-2 dehydrogenase / sirohydrochlorin ferrochelatase family. This sequence in the C-terminal section; belongs to the precorrin methyltransferase family.

It catalyses the reaction uroporphyrinogen III + 2 S-adenosyl-L-methionine = precorrin-2 + 2 S-adenosyl-L-homocysteine + H(+). It carries out the reaction precorrin-2 + NAD(+) = sirohydrochlorin + NADH + 2 H(+). The enzyme catalyses siroheme + 2 H(+) = sirohydrochlorin + Fe(2+). The protein operates within cofactor biosynthesis; adenosylcobalamin biosynthesis; precorrin-2 from uroporphyrinogen III: step 1/1. It functions in the pathway cofactor biosynthesis; adenosylcobalamin biosynthesis; sirohydrochlorin from precorrin-2: step 1/1. Its pathway is porphyrin-containing compound metabolism; siroheme biosynthesis; precorrin-2 from uroporphyrinogen III: step 1/1. It participates in porphyrin-containing compound metabolism; siroheme biosynthesis; siroheme from sirohydrochlorin: step 1/1. The protein operates within porphyrin-containing compound metabolism; siroheme biosynthesis; sirohydrochlorin from precorrin-2: step 1/1. Functionally, multifunctional enzyme that catalyzes the SAM-dependent methylations of uroporphyrinogen III at position C-2 and C-7 to form precorrin-2 via precorrin-1. Then it catalyzes the NAD-dependent ring dehydrogenation of precorrin-2 to yield sirohydrochlorin. Finally, it catalyzes the ferrochelation of sirohydrochlorin to yield siroheme. In Ectopseudomonas mendocina (strain ymp) (Pseudomonas mendocina), this protein is Siroheme synthase.